We begin with the raw amino-acid sequence, 232 residues long: 5'-methylthioadenosine/S-adenosylhomocysteine nucleosidase (232 aa).

Residue Glu-12 is the Proton acceptor of the active site. Substrate-binding positions include Gly-78, Val-152, and 173 to 174 (ME). The active-site Proton donor is Asp-197.

The protein belongs to the PNP/UDP phosphorylase family. MtnN subfamily. As to quaternary structure, homodimer.

The enzyme catalyses S-adenosyl-L-homocysteine + H2O = S-(5-deoxy-D-ribos-5-yl)-L-homocysteine + adenine. It catalyses the reaction S-methyl-5'-thioadenosine + H2O = 5-(methylsulfanyl)-D-ribose + adenine. It carries out the reaction 5'-deoxyadenosine + H2O = 5-deoxy-D-ribose + adenine. It functions in the pathway amino-acid biosynthesis; L-methionine biosynthesis via salvage pathway; S-methyl-5-thio-alpha-D-ribose 1-phosphate from S-methyl-5'-thioadenosine (hydrolase route): step 1/2. Its function is as follows. Catalyzes the irreversible cleavage of the glycosidic bond in both 5'-methylthioadenosine (MTA) and S-adenosylhomocysteine (SAH/AdoHcy) to adenine and the corresponding thioribose, 5'-methylthioribose and S-ribosylhomocysteine, respectively. Also cleaves 5'-deoxyadenosine, a toxic by-product of radical S-adenosylmethionine (SAM) enzymes, into 5-deoxyribose and adenine. Thus, is required for in vivo function of the radical SAM enzymes biotin synthase and lipoic acid synthase, that are inhibited by 5'-deoxyadenosine accumulation. This is 5'-methylthioadenosine/S-adenosylhomocysteine nucleosidase from Buchnera aphidicola subsp. Acyrthosiphon pisum (strain 5A).